The chain runs to 53 residues: ATP synthase protein 8 (53 aa).

The helical transmembrane segment at 4-24 threads the bilayer; sequence MAPISWLLLFIIFSITFILFC.

The protein belongs to the ATPase protein 8 family. As to quaternary structure, F-type ATPases have 2 components, CF(1) - the catalytic core - and CF(0) - the membrane proton channel.

The protein resides in the mitochondrion membrane. Functionally, mitochondrial membrane ATP synthase (F(1)F(0) ATP synthase or Complex V) produces ATP from ADP in the presence of a proton gradient across the membrane which is generated by electron transport complexes of the respiratory chain. F-type ATPases consist of two structural domains, F(1) - containing the extramembraneous catalytic core and F(0) - containing the membrane proton channel, linked together by a central stalk and a peripheral stalk. During catalysis, ATP synthesis in the catalytic domain of F(1) is coupled via a rotary mechanism of the central stalk subunits to proton translocation. Part of the complex F(0) domain. Minor subunit located with subunit a in the membrane. This is ATP synthase protein 8 (mt:ATPase8) from Drosophila sechellia (Fruit fly).